Reading from the N-terminus, the 869-residue chain is Leucine--tRNA ligase (869 aa).

The 'HIGH' region motif lies at proline 42–histidine 52. A 'KMSKS' region motif is present at residues threonine 624–serine 628. An ATP-binding site is contributed by lysine 627.

It belongs to the class-I aminoacyl-tRNA synthetase family.

The protein localises to the cytoplasm. It catalyses the reaction tRNA(Leu) + L-leucine + ATP = L-leucyl-tRNA(Leu) + AMP + diphosphate. This is Leucine--tRNA ligase from Nitrosomonas europaea (strain ATCC 19718 / CIP 103999 / KCTC 2705 / NBRC 14298).